A 208-amino-acid polypeptide reads, in one-letter code: Probable nicotinate-nucleotide adenylyltransferase (208 aa).

Belongs to the NadD family.

It catalyses the reaction nicotinate beta-D-ribonucleotide + ATP + H(+) = deamido-NAD(+) + diphosphate. It functions in the pathway cofactor biosynthesis; NAD(+) biosynthesis; deamido-NAD(+) from nicotinate D-ribonucleotide: step 1/1. Its function is as follows. Catalyzes the reversible adenylation of nicotinate mononucleotide (NaMN) to nicotinic acid adenine dinucleotide (NaAD). The sequence is that of Probable nicotinate-nucleotide adenylyltransferase from Kineococcus radiotolerans (strain ATCC BAA-149 / DSM 14245 / SRS30216).